Here is a 279-residue protein sequence, read N- to C-terminus: Orotidine 5'-phosphate decarboxylase (279 aa).

Substrate contacts are provided by residues Asp8, Lys30, 58-67 (DLKIHDIPNT), Thr117, Arg177, Gln186, Gly206, and Arg207. The Proton donor role is filled by Lys60.

This sequence belongs to the OMP decarboxylase family. Type 1 subfamily. In terms of assembly, homodimer.

The enzyme catalyses orotidine 5'-phosphate + H(+) = UMP + CO2. The protein operates within pyrimidine metabolism; UMP biosynthesis via de novo pathway; UMP from orotate: step 2/2. Catalyzes the decarboxylation of orotidine 5'-monophosphate (OMP) to uridine 5'-monophosphate (UMP). The protein is Orotidine 5'-phosphate decarboxylase of Campylobacter jejuni (strain RM1221).